The sequence spans 656 residues: MYLTLIILPLLGSIVSGFFGRKVGVKGAHLITCVSVITTTFLAILAFFEVGFNNIPVTINVARWVDVESLYVLWNFRFDSLTVSMFITVLIVSSLVHIYSISYMSHDPHNQRFFSYLSLFTFMMIILVTGNNYLIMFVGWEGVGVCSYLLVNFWFTRIAANQSSLSALLTNREGDTLLTVGMFAILWSFGNIDYSTVFALAPYYNENIITIIGICLLIGATAKSSQVGLHIWLPQAMEGPTPVSALIHAATMVTAGVYLLMRSSPLIEYSSTVLVLCLWLGAITTVFSSLIGLFQQDIKKVIAYSTMSQLGMMVIAVGLSSYNLALFHLVNHAFYKALLFLGAGSVIHAVADNQDFRKYGGLREFLPLTYSVMLIASLSLVAVPFMTGFYSKDFILESAYGQYYLSSTIVYFVATIGAMFTTLYSAKVLYLTFLTNPNGPLVNYKHAHEGDLFMTIPLIILAIFSIFFGYLTKDIFIGLGTGFFTDNSLFIHPSHEIMLDTEFAVPTFFKLLPFVFTVSLSLLSVLLSEFLPKLLINFKFSRLGYNIFSFFNQRFYIELFYNKYIVEGVLKLGGQTSKNLNKGPVKLLGPYGLEKGGLALSNSLGNLSTGIVTTYALYILIGLIFDISLLYFSYNDNNLLILIIFTLFALLNSNKK.

17 consecutive transmembrane segments (helical) span residues 4–21 (TLII…FFGR), 28–50 (AHLI…FFEV), 81–103 (LTVS…SISY), 112–129 (RFFS…ILVT), 133–155 (YLIM…NFWF), 176–198 (TLLT…STVF), 208–230 (IITI…VGLH), 243–262 (VSAL…LLMR), 272–294 (TVLV…IGLF), 301–319 (VIAY…AVGL), 329–351 (LVNH…HAVA), 364–386 (EFLP…VPFM), 409–431 (IVYF…VLYL), 452–471 (LFMT…FGYL), 514–536 (FVFT…KLLI), 603–625 (SLGN…GLIF), and 629–651 (LLYF…FALL).

This sequence belongs to the complex I subunit 5 family.

It is found in the mitochondrion inner membrane. The catalysed reaction is a ubiquinone + NADH + 5 H(+)(in) = a ubiquinol + NAD(+) + 4 H(+)(out). Functionally, core subunit of the mitochondrial membrane respiratory chain NADH dehydrogenase (Complex I) that is believed to belong to the minimal assembly required for catalysis. Complex I functions in the transfer of electrons from NADH to the respiratory chain. The immediate electron acceptor for the enzyme is believed to be ubiquinone. The protein is NADH-ubiquinone oxidoreductase chain 5 (nad5) of Aspergillus niger.